We begin with the raw amino-acid sequence, 133 residues long: Aspartate 1-decarboxylase (133 aa).

Residue serine 26 is the Schiff-base intermediate with substrate; via pyruvic acid of the active site. The residue at position 26 (serine 26) is a Pyruvic acid (Ser). Threonine 58 provides a ligand contact to substrate. Tyrosine 59 functions as the Proton donor in the catalytic mechanism. Residue 74-76 (GAA) coordinates substrate.

The protein belongs to the PanD family. As to quaternary structure, heterooctamer of four alpha and four beta subunits. Pyruvate serves as cofactor. In terms of processing, is synthesized initially as an inactive proenzyme, which is activated by self-cleavage at a specific serine bond to produce a beta-subunit with a hydroxyl group at its C-terminus and an alpha-subunit with a pyruvoyl group at its N-terminus.

It is found in the cytoplasm. The catalysed reaction is L-aspartate + H(+) = beta-alanine + CO2. Its pathway is cofactor biosynthesis; (R)-pantothenate biosynthesis; beta-alanine from L-aspartate: step 1/1. In terms of biological role, catalyzes the pyruvoyl-dependent decarboxylation of aspartate to produce beta-alanine. This chain is Aspartate 1-decarboxylase, found in Legionella pneumophila subsp. pneumophila (strain Philadelphia 1 / ATCC 33152 / DSM 7513).